Consider the following 167-residue polypeptide: uncharacterized protein (167 aa).

The chain crosses the membrane as a helical span at residues L39–S59. The stretch at L92–T122 forms a coiled coil. The disordered stretch occupies residues R134 to D167. Residues E154–D167 show a composition bias toward basic and acidic residues.

The protein resides in the mitochondrion membrane. This is an uncharacterized protein from Arabidopsis thaliana (Mouse-ear cress).